A 109-amino-acid chain; its full sequence is MYQLQFINLVYDTTKLTHLEQTNINLFIGNWSNHQLQKSICIRHGDDTSHNQYHILFIDTAHQRIKFSSIDNEEIIYILDYDDTQHILMQTSSKQGIGTSRPIVYERLV.

The binds to staphopain B stretch occupies residues 97–101; that stretch reads IGTSR.

The protein belongs to the protease inhibitor I57 (SspC) family. Forms a stable non-covalent complex with prematurely activated/folded SspB.

The protein localises to the cytoplasm. In terms of biological role, specifically inhibits the cysteine protease staphopain B (SspB) by blocking the active site of the enzyme. Probably required to protect cytoplasmic proteins from being degraded by prematurely activated/folded prostaphopain B. Also involved in growth capacity, viability and bacterial morphology. The protein is Staphostatin B (sspC) of Staphylococcus aureus (strain NCTC 8325 / PS 47).